We begin with the raw amino-acid sequence, 451 residues long: Tubulin gamma-1 chain (451 aa).

142-148 contributes to the GTP binding site; it reads AGGTGSG.

It belongs to the tubulin family.

It localises to the cytoplasm. It is found in the cytoskeleton. Its subcellular location is the microtubule organizing center. The protein resides in the centrosome. The protein localises to the spindle. Functionally, tubulin is the major constituent of microtubules. The gamma chain is found at microtubule organizing centers (MTOC) such as the spindle poles or the centrosome, suggesting that it is involved in the minus-end nucleation of microtubule assembly. The protein is Tubulin gamma-1 chain (tubg1) of Xenopus laevis (African clawed frog).